A 130-amino-acid polypeptide reads, in one-letter code: Small ribosomal subunit protein uS9 (130 aa).

This sequence belongs to the universal ribosomal protein uS9 family.

This chain is Small ribosomal subunit protein uS9, found in Streptococcus uberis (strain ATCC BAA-854 / 0140J).